A 759-amino-acid polypeptide reads, in one-letter code: Protein transport protein sec23-1 (759 aa).

Zn(2+) contacts are provided by Cys56, Cys60, Cys79, and Cys82.

The protein belongs to the SEC23/SEC24 family. SEC23 subfamily. As to quaternary structure, the COPII coat is composed of at least 5 proteins: the sec23/24 complex, the sec13/31 complex, and the protein sar1.

The protein localises to the cytoplasm. The protein resides in the cytoplasmic vesicle. It localises to the COPII-coated vesicle membrane. It is found in the endoplasmic reticulum membrane. Its subcellular location is the golgi apparatus membrane. Its function is as follows. Component of the coat protein complex II (COPII) which promotes the formation of transport vesicles from the endoplasmic reticulum (ER). The coat has two main functions, the physical deformation of the endoplasmic reticulum membrane into vesicles and the selection of cargo molecules. This is Protein transport protein sec23-1 (sec231) from Schizosaccharomyces pombe (strain 972 / ATCC 24843) (Fission yeast).